The chain runs to 152 residues: Adenosine 5'-monophosphoramidase HNT1 (152 aa).

The HIT domain maps to 8 to 119 (IFCKIIKGEI…IPKKDEATGL (112 aa)). Residues 33–34 (DI), Asn93, 99–101 (HQV), and 106–108 (HFH) each bind AMP. The Histidine triad motif motif lies at 104-108 (HVHFH). Residue His106 is the Tele-AMP-histidine intermediate of the active site.

This sequence belongs to the HINT family. In terms of assembly, homodimer. It depends on Mg(2+) as a cofactor.

The catalysed reaction is adenosine 5'-phosphoramidate + H2O = AMP + NH4(+). Its function is as follows. Hydrolyzes adenosine 5'-monophosphoramidate substrates such as AMP-morpholidate, AMP-N-alanine methyl ester, AMP-alpha-acetyl lysine methyl ester and AMP-NH2. The chain is Adenosine 5'-monophosphoramidase HNT1 from Candida albicans (strain SC5314 / ATCC MYA-2876) (Yeast).